The primary structure comprises 265 residues: Indole-3-glycerol phosphate synthase (265 aa).

The protein belongs to the TrpC family.

It carries out the reaction 1-(2-carboxyphenylamino)-1-deoxy-D-ribulose 5-phosphate + H(+) = (1S,2R)-1-C-(indol-3-yl)glycerol 3-phosphate + CO2 + H2O. Its pathway is amino-acid biosynthesis; L-tryptophan biosynthesis; L-tryptophan from chorismate: step 4/5. The polypeptide is Indole-3-glycerol phosphate synthase (Xanthomonas campestris pv. campestris (strain 8004)).